A 144-amino-acid polypeptide reads, in one-letter code: NADH dehydrogenase [ubiquinone] 1 alpha subcomplex subunit 13 (144 aa).

Ala2 is modified (N-acetylalanine). A helical membrane pass occupies residues 30 to 51; sequence LSGYSMLAIGIGTLIYGHWSIM. Residues 102–144 are important for inducing cell death; that stretch reads PDWKVGESVFHTTRWVPPLIGELYGLRTTEEALHASHGFMWYT.

The protein belongs to the complex I NDUFA13 subunit family. In terms of assembly, complex I is composed of 45 different subunits. Interacts with CARD15, but not with CARD4. Interacts with STAT3, but not with STAT1, STAT2 and STAT5A. Interacts with OLFM4. As to quaternary structure, (Microbial infection) Interacts with HHV-8 IRF1, in the nucleus, with HPV-16 E6 and SV40 LT. As to expression, widely expressed, with highest expression in heart, skeletal muscle, liver, kidney and placenta. In intestinal mucosa, down-regulated in areas involved in Crohn disease and ulcerative colitis.

Its subcellular location is the mitochondrion inner membrane. It localises to the nucleus. In terms of biological role, accessory subunit of the mitochondrial membrane respiratory chain NADH dehydrogenase (Complex I), that is believed not to be involved in catalysis. Complex I functions in the transfer of electrons from NADH to the respiratory chain. The immediate electron acceptor for the enzyme is believed to be ubiquinone. Involved in the interferon/all-trans-retinoic acid (IFN/RA) induced cell death. This apoptotic activity is inhibited by interaction with viral IRF1. Prevents the transactivation of STAT3 target genes. May play a role in CARD15-mediated innate mucosal responses and serve to regulate intestinal epithelial cell responses to microbes. In Homo sapiens (Human), this protein is NADH dehydrogenase [ubiquinone] 1 alpha subcomplex subunit 13 (NDUFA13).